A 230-amino-acid polypeptide reads, in one-letter code: Somatolactin (230 aa).

The N-terminal stretch at 1–23 (MKKTTVLQVCMVFVVCSLQAVIG) is a signal peptide. Disulfide bonds link cysteine 28–cysteine 38, cysteine 87–cysteine 202, and cysteine 219–cysteine 227. Asparagine 226 carries N-linked (GlcNAc...) asparagine glycosylation.

It belongs to the somatotropin/prolactin family.

The protein resides in the secreted. The polypeptide is Somatolactin (Carassius auratus (Goldfish)).